The chain runs to 1039 residues: Isoleucine--tRNA ligase (1039 aa).

Positions 46-56 match the 'HIGH' region motif; it reads PYCSGAIHLGT. The 'KMSKS' region motif lies at 600–604; that stretch reads KMSKS. Lys603 serves as a coordination point for ATP.

Belongs to the class-I aminoacyl-tRNA synthetase family. IleS type 2 subfamily. As to quaternary structure, monomer. Zn(2+) serves as cofactor.

It is found in the cytoplasm. It carries out the reaction tRNA(Ile) + L-isoleucine + ATP = L-isoleucyl-tRNA(Ile) + AMP + diphosphate. In terms of biological role, catalyzes the attachment of isoleucine to tRNA(Ile). As IleRS can inadvertently accommodate and process structurally similar amino acids such as valine, to avoid such errors it has two additional distinct tRNA(Ile)-dependent editing activities. One activity is designated as 'pretransfer' editing and involves the hydrolysis of activated Val-AMP. The other activity is designated 'posttransfer' editing and involves deacylation of mischarged Val-tRNA(Ile). This is Isoleucine--tRNA ligase from Methanocaldococcus jannaschii (strain ATCC 43067 / DSM 2661 / JAL-1 / JCM 10045 / NBRC 100440) (Methanococcus jannaschii).